A 694-amino-acid chain; its full sequence is MTHTNEHDHKAEQQQNGRGDTTTETVNPQKMKLVTKLLIDNKFGLMDDLNFSIPLTASSEGVPISAKTSELGTEYLKNQQENSVSPILPISRSTRIKADRVRIYLDYYYNILERCISIDSSQNHHEGVEGVYNPLQVIRNRKLKKKHHELPTREFYTTKHPIIAIKQFSKKPNKKMPWFVDINEKYMDLTWRTSHWEELVDPQGKLWFQSYSPSNESSGSSSSRRHHGHHIHPRRHLQHHSRVRTANSVHSNTQSLTPKRVMTNEEDNNNHNNNNMITKIATTPEAQISRNKKSDLNLSHIHLEVPITNTVTNTSSDQGSLIIEAKGSSYGGDRRGSSNTSGSGGKRNSKHYRSKSAGPPENEKSRMNGLEKIISKTSKGWSRSPKKNTPGLEKQVLLNPTISNGGTSRRSSNNGESISTNSSKSSMGITFGNTETYKTPVDNGKDAIIRQSLLSEVPVHTLRGKTSNRSLRAEGEQALESDKELPNGAGSIYEGAPREKTTSQGSEPVGLVSDSLQVDEQLQRYWHDTRYIMSTVAMMQHRRETHDIVKRREIARRNEIEITQDADTNIRKTADALTQYDNELNKVLKLGNDWTSKLLNDYSIRVETLISSSDRILSDINTTLTLKLKMFQENTERYVTVKVMRAQKMTKTIYRLLEFGIVLVLWTIWFLFSVLRSIRFTIFLVLKIIKALLW.

Residues Met-1–Glu-12 are compositionally biased toward basic and acidic residues. The tract at residues Met-1–Val-26 is disordered. Over residues Gln-13 to Val-26 the composition is skewed to polar residues. At Ser-85 the chain carries Phosphoserine. Residues Tyr-211–Ser-222 show a composition bias toward low complexity. Disordered stretches follow at residues Tyr-211–Gln-287, Ala-325–Tyr-437, and Lys-465–Leu-511. The span at Ser-223–Val-243 shows a compositional bias: basic residues. Positions Arg-244–Thr-257 are enriched in polar residues. The residue at position 263 (Thr-263) is a Phosphothreonine. Polar residues predominate over residues Met-276 to Gln-287. A compositionally biased stretch (low complexity) spans Ser-403–Ser-417. Positions Ile-418 to Tyr-437 are enriched in polar residues. Residues Leu-471–Leu-485 show a composition bias toward basic and acidic residues. 2 positions are modified to phosphoserine: Ser-481 and Ser-491. A Phosphotyrosine modification is found at Tyr-493. The helical transmembrane segment at Arg-655–Leu-675 threads the bilayer.

The protein resides in the membrane. It is found in the cytoplasm. In Saccharomyces cerevisiae (strain ATCC 204508 / S288c) (Baker's yeast), this protein is Maintenance of telomere capping protein 4 (MTC4).